Consider the following 658-residue polypeptide: Carnitine O-palmitoyltransferase 2, mitochondrial (658 aa).

The N-terminal 25 residues, Met-1–Leu-25, are a transit peptide targeting the mitochondrion. Over Ser-26–Leu-178 the chain is Mitochondrial matrix. Position 69 is an N6-succinyllysine (Lys-69). An N6-acetyllysine modification is found at Lys-79. Residue Lys-85 is modified to N6-succinyllysine. Positions Asn-179–Asn-208 form an intramembrane region, note=Mitochondrial inner membrane. The Mitochondrial matrix segment spans residues Ala-209–Thr-658. Lys-239 carries the post-translational modification N6-acetyllysine; alternate. Lys-239 carries the N6-succinyllysine; alternate modification. Residue His-372 is the Proton acceptor of the active site. The residue at position 418 (Lys-418) is an N6-acetyllysine; alternate. An N6-succinyllysine; alternate modification is found at Lys-418. Residues Lys-424 and Lys-439 each carry the N6-succinyllysine modification. Position 452-464 (Gly-452–Asp-464) interacts with CoA. Residues Tyr-486, Ser-488, and Thr-499 each coordinate (R)-carnitine. Lys-510 carries the N6-acetyllysine; alternate modification. Residue Lys-510 is modified to N6-succinyllysine; alternate.

This sequence belongs to the carnitine/choline acetyltransferase family.

The protein localises to the mitochondrion inner membrane. It catalyses the reaction (R)-carnitine + hexadecanoyl-CoA = O-hexadecanoyl-(R)-carnitine + CoA. It carries out the reaction octanoyl-CoA + (R)-carnitine = O-octanoyl-(R)-carnitine + CoA. The catalysed reaction is decanoyl-CoA + (R)-carnitine = O-decanoyl-(R)-carnitine + CoA. The enzyme catalyses dodecanoyl-CoA + (R)-carnitine = O-dodecanoyl-R-carnitine + CoA. It catalyses the reaction tetradecanoyl-CoA + (R)-carnitine = O-tetradecanoyl-(R)-carnitine + CoA. It carries out the reaction (R)-carnitine + octadecanoyl-CoA = O-octadecanoyl-(R)-carnitine + CoA. The catalysed reaction is eicosanoyl-CoA + (R)-carnitine = O-eicosanoyl-(R)-carnitine + CoA. The enzyme catalyses (9Z)-tetradecenoyl-CoA + (R)-carnitine = O-(9Z)-tetradecenoyl-(R)-carnitine + CoA. It catalyses the reaction (5Z)-tetradecenoyl-CoA + (R)-carnitine = O-(5Z)-tetradecenoyl-(R)-carnitine + CoA. It carries out the reaction (R)-carnitine + (9Z)-octadecenoyl-CoA = O-(9Z)-octadecenoyl-(R)-carnitine + CoA. The catalysed reaction is 4,8-dimethylnonanoyl-CoA + (R)-carnitine = O-4,8-dimethylnonanoyl-(R)-carnitine + CoA. It functions in the pathway lipid metabolism; fatty acid beta-oxidation. In terms of biological role, involved in the intramitochondrial synthesis of acylcarnitines from accumulated acyl-CoA metabolites. Reconverts acylcarnitines back into the respective acyl-CoA esters that can then undergo beta-oxidation, an essential step for the mitochondrial uptake of long-chain fatty acids and their subsequent beta-oxidation in the mitochondrion. Active with medium (C8-C12) and long-chain (C14-C18) acyl-CoA esters. This Bos taurus (Bovine) protein is Carnitine O-palmitoyltransferase 2, mitochondrial (CPT2).